Consider the following 268-residue polypeptide: Indole-3-glycerol phosphate synthase (268 aa).

The protein belongs to the TrpC family.

The catalysed reaction is 1-(2-carboxyphenylamino)-1-deoxy-D-ribulose 5-phosphate + H(+) = (1S,2R)-1-C-(indol-3-yl)glycerol 3-phosphate + CO2 + H2O. It functions in the pathway amino-acid biosynthesis; L-tryptophan biosynthesis; L-tryptophan from chorismate: step 4/5. The protein is Indole-3-glycerol phosphate synthase of Micrococcus luteus (strain ATCC 4698 / DSM 20030 / JCM 1464 / CCM 169 / CCUG 5858 / IAM 1056 / NBRC 3333 / NCIMB 9278 / NCTC 2665 / VKM Ac-2230) (Micrococcus lysodeikticus).